A 491-amino-acid chain; its full sequence is Glutamate--tRNA ligase (491 aa).

The 'HIGH' region motif lies at 9–19 (PSPTGTPHVGL). The 'KMSKS' region motif lies at 253-257 (KLSKR). Residue K256 coordinates ATP.

The protein belongs to the class-I aminoacyl-tRNA synthetase family. Glutamate--tRNA ligase type 1 subfamily. As to quaternary structure, monomer.

It is found in the cytoplasm. The enzyme catalyses tRNA(Glu) + L-glutamate + ATP = L-glutamyl-tRNA(Glu) + AMP + diphosphate. Its function is as follows. Catalyzes the attachment of glutamate to tRNA(Glu) in a two-step reaction: glutamate is first activated by ATP to form Glu-AMP and then transferred to the acceptor end of tRNA(Glu). This chain is Glutamate--tRNA ligase, found in Mycolicibacterium gilvum (strain PYR-GCK) (Mycobacterium gilvum (strain PYR-GCK)).